Reading from the N-terminus, the 566-residue chain is Serine/threonine-protein kinase haspin homolog (566 aa).

Residues 248–566 (LLNTKKIGEG…HCANYLFNLN (319 aa)) form the Protein kinase domain. Residues 254–262 (IGEGAYGEV), lysine 282, 377–382 (KFAGSD), 418–423 (DLHLGN), and 456–458 (DYT) each bind ATP. Aspartate 418 (proton acceptor) is an active-site residue.

The protein belongs to the protein kinase superfamily. Ser/Thr protein kinase family. Haspin subfamily. As to quaternary structure, interacts with pds5 and vtd. Mg(2+) is required as a cofactor.

It localises to the nucleus lamina. The protein localises to the chromosome. It is found in the cytoplasm. The protein resides in the cytoskeleton. Its subcellular location is the spindle. The enzyme catalyses L-seryl-[protein] + ATP = O-phospho-L-seryl-[protein] + ADP + H(+). It carries out the reaction L-threonyl-[protein] + ATP = O-phospho-L-threonyl-[protein] + ADP + H(+). Functionally, serine/threonine-protein kinase that phosphorylates histone H3 at 'Thr-4' (H3T3ph) during mitosis and interphase. Function is essential for chromosome organization during mitosis and genome organization in interphase cells, thus playing a functional role in gene regulation. During mitosis, may act through H3T3ph to both position and modulate activation of AURKB and other components of the chromosomal passenger complex (CPC) at centromeres to ensure proper chromatid cohesion, metaphase alignment and normal progression through the cell cycle. During interphase, associates with the cohesion complex and mediates pds5 binding to chromatin to ensure correct sister chromatid cohesion, chromatin organization, and also functions with Pds5-cohesin to modify Polycomb-dependent homeotic transformations. Function during interphase is required for insulator activity, nuclear compaction, heterochromatin-induced position-effect variegation and PcG-mediated pairing-sensitive silencing. The sequence is that of Serine/threonine-protein kinase haspin homolog from Drosophila melanogaster (Fruit fly).